We begin with the raw amino-acid sequence, 171 residues long: Dual specificity protein phosphatase OPG106 (171 aa).

Residues 23–171 enclose the Tyrosine-protein phosphatase domain; the sequence is SPTIMTRVTN…IIEKYVIDKN (149 aa). The Phosphocysteine intermediate role is filled by Cys110.

The protein belongs to the protein-tyrosine phosphatase family. Non-receptor class dual specificity subfamily. As to quaternary structure, homodimer.

It localises to the virion. The protein localises to the host cytoplasm. The enzyme catalyses O-phospho-L-tyrosyl-[protein] + H2O = L-tyrosyl-[protein] + phosphate. It carries out the reaction O-phospho-L-seryl-[protein] + H2O = L-seryl-[protein] + phosphate. Its activity is regulated as follows. Inhibited by NSC-62914, NSC-28086, NSC-105687, NSC-23173, 540211 and 217691 with IC50 values of 48, 51, 212, 342, 4 and 11 uM, respectively. In terms of biological role, serine/tyrosine phosphatase which down-regulates cellular antiviral response by dephosphorylating activated host STAT1 and blocking interferon (IFN)-stimulated innate immune responses. Dephosphorylates the OPG144 protein. This chain is Dual specificity protein phosphatase OPG106 (OPG106), found in Homo sapiens (Human).